The following is a 224-amino-acid chain: dTDP-fucosamine acetyltransferase (224 aa).

An N-acetyltransferase domain is found at 94–224 (PALRQLASAA…VESTAYWLYR (131 aa)). Acetyl-CoA-binding positions include 168 to 174 (LAGRGAG), asparagine 201, and arginine 207. Tyrosine 208 serves as the catalytic Proton donor.

It belongs to the WecD family. As to quaternary structure, homodimer.

The catalysed reaction is dTDP-4-amino-4,6-dideoxy-alpha-D-galactose + acetyl-CoA = dTDP-4-acetamido-4,6-dideoxy-alpha-D-galactose + CoA + H(+). The protein operates within bacterial outer membrane biogenesis; enterobacterial common antigen biosynthesis. Its function is as follows. Catalyzes the acetylation of dTDP-fucosamine (dTDP-4-amino-4,6-dideoxy-D-galactose) to dTDP-Fuc4NAc, which is utilized in the biosynthesis of the enterobacterial common antigen (ECA). The sequence is that of dTDP-fucosamine acetyltransferase from Escherichia coli O6:H1 (strain CFT073 / ATCC 700928 / UPEC).